A 2261-amino-acid chain; its full sequence is Phospholipid-transporting ATPase ABCA1 (2261 aa).

A lipid anchor (S-palmitoyl cysteine) is attached at Cys-3. N-linked (GlcNAc...) asparagine glycosylation occurs at Asn-14. Residues 22–42 (TCQLLLEVAWPLFIFLILISV) form a helical membrane-spanning segment. Cys-23 is lipidated: S-palmitoyl cysteine. Residues 43-639 (RLSYPPYEQH…DIFLRVMSRS (597 aa)) are Extracellular-facing. An annulus domain 1 region spans residues 69–80 (WVQGIICNANNP). A disulfide bond links Cys-75 and Cys-309. Asn-98, Asn-151, Asn-161, Asn-196, Asn-244, Asn-292, Asn-337, and Asn-349 each carry an N-linked (GlcNAc...) asparagine glycan. Positions 368 to 379 (SRIIWKALKPLL) are annulus domain 2. Asn-400, Asn-478, Asn-489, and Asn-521 each carry an N-linked (GlcNAc...) asparagine glycan. The interval 564 to 594 (ERTNKIKDGYWDPGPRADPFEDMRYVWGGFA) is gateway domain. 5 consecutive transmembrane segments (helical) span residues 640–660 (MPLF…KSIV), 683–703 (FSWF…LVVI), 716–736 (SVVF…CFLI), 745–765 (LAAA…VLCV), and 777–797 (IFAS…FALF). N-linked (GlcNAc...) asparagine glycosylation is present at Asn-820. Residues 827-847 (MMLFDTFLYGVMTWYIEAVFP) form a helical membrane-spanning segment. The ABC transporter 1 domain maps to 899–1131 (VSIQNLVKVY…LGTGYYLTLV (233 aa)). 933-940 (GHNGAGKT) provides a ligand contact to ATP. The helical transmembrane segment at 941–961 (TTMSILTGLFPPTSGTAYILG) threads the bilayer. Ser-1042 carries the post-translational modification Phosphoserine; by PKA. Residues Cys-1110 and Cys-1111 are each lipidated (S-palmitoyl cysteine). N-linked (GlcNAc...) asparagine glycans are attached at residues Asn-1144 and Asn-1294. The tract at residues 1285–1310 (FTEDDAVDPNDSDIDPESRETDLLSG) is disordered. The span at 1287-1299 (EDDAVDPNDSDID) shows a compositional bias: acidic residues. Ser-1296 carries the post-translational modification Phosphoserine. The helical transmembrane segment at 1351–1371 (IVLPAVFVCIALVFSLIVPPF) threads the bilayer. The Extracellular segment spans residues 1372–1656 (GKYPSLELQP…ALMTTSVDVL (285 aa)). Asn-1453 carries N-linked (GlcNAc...) asparagine glycosylation. Cys-1463 and Cys-1477 are joined by a disulfide. N-linked (GlcNAc...) asparagine glycans are attached at residues Asn-1499, Asn-1504, and Asn-1637. The next 6 membrane-spanning stretches (helical) occupy residues 1657 to 1677 (VSIC…VFLI), 1703 to 1723 (FVWD…IFIC), 1735 to 1755 (LPVL…LMYP), 1768 to 1788 (VVLT…TFVL), 1802 to 1822 (ILKS…LIDM), and 1852 to 1872 (NLFA…LIQY). The ABC transporter 2 domain occupies 1912–2144 (LEIKELTKIY…FGDGYTIVVR (233 aa)). Residue 1946 to 1953 (GVNGAGKS) participates in ATP binding. Asn-2044 carries an N-linked (GlcNAc...) asparagine glycan. Ser-2054 bears the Phosphoserine; by PKA mark. Asn-2238 is a glycosylation site (N-linked (GlcNAc...) asparagine).

The protein belongs to the ABC transporter superfamily. ABCA family. In terms of assembly, interacts with MEGF10. May interact with APOE1; functionally associated with APOE1 in the biogenesis of HDLs. Interacts with ABCA8; this interaction potentiates cholesterol efflux. Interacts with ABCA12 and NR1H2; this interaction is required for ABCA1 localization to the cell surface and is necessary for its normal activity and stability. Post-translationally, phosphorylation on Ser-2054 regulates phospholipid efflux. Palmitoylated by ZDHHC8. Palmitoylation is essential for localization to the plasma membrane. As to expression, widely expressed in adult tissues. Highest levels are found in pregnant uterus and uterus.

Its subcellular location is the cell membrane. The protein resides in the endosome. The enzyme catalyses ATP + H2O + phospholipidSide 1 = ADP + phosphate + phospholipidSide 2.. It carries out the reaction a 1,2-diacyl-sn-glycero-3-phosphocholine(out) + ATP + H2O = a 1,2-diacyl-sn-glycero-3-phosphocholine(in) + ADP + phosphate + H(+). The catalysed reaction is a 1,2-diacyl-sn-glycero-3-phospho-L-serine(out) + ATP + H2O = a 1,2-diacyl-sn-glycero-3-phospho-L-serine(in) + ADP + phosphate + H(+). It catalyses the reaction a sphingomyelin(in) + ATP + H2O = a sphingomyelin(out) + ADP + phosphate + H(+). The enzyme catalyses cholesterol(in) + ATP + H2O = cholesterol(out) + ADP + phosphate + H(+). With respect to regulation, ATPase activity is decreased by cholesterol and ceramide. ATPase activity is stimulated by phosphatidylcholine and to a lesser degree by phosphatidylserine and sphingomyelin. Phospholipid translocase activity is highly reduced by berylium fluoride and aluminum flouride and reduced by N-ethylmaleimide. In terms of biological role, catalyzes the translocation of specific phospholipids from the cytoplasmic to the extracellular/lumenal leaflet of membrane coupled to the hydrolysis of ATP. Thereby, participates in phospholipid transfer to apolipoproteins to form nascent high density lipoproteins/HDLs. Transports preferentially phosphatidylcholine over phosphatidylserine. May play a similar role in the efflux of intracellular cholesterol to apolipoproteins and the formation of nascent high density lipoproteins/HDLs. Translocates phospholipids from the outer face of the plasma membrane and forces it through its gateway and annulus into an elongated hydrophobic tunnel in its extracellular domain. The polypeptide is Phospholipid-transporting ATPase ABCA1 (Mus musculus (Mouse)).